The following is a 449-amino-acid chain: Glucose-6-phosphate isomerase (449 aa).

Glu-291 (proton donor) is an active-site residue. Residues His-312 and Lys-426 contribute to the active site.

It belongs to the GPI family.

It localises to the cytoplasm. It catalyses the reaction alpha-D-glucose 6-phosphate = beta-D-fructose 6-phosphate. It participates in carbohydrate biosynthesis; gluconeogenesis. Its pathway is carbohydrate degradation; glycolysis; D-glyceraldehyde 3-phosphate and glycerone phosphate from D-glucose: step 2/4. Catalyzes the reversible isomerization of glucose-6-phosphate to fructose-6-phosphate. This is Glucose-6-phosphate isomerase from Streptococcus pyogenes serotype M5 (strain Manfredo).